The following is a 370-amino-acid chain: Ubiquitin carboxyl-terminal hydrolase 12 (370 aa).

Positions 1–4 (MEIL) match the Required for plasma membrane localization of USP12/WDR20 motif. Residues 39 to 369 (FGLVNFGNTC…SGYILFYQSR (331 aa)) enclose the USP domain. Cys48 serves as the catalytic Nucleophile. Basic and acidic residues predominate over residues 146-157 (QEKQNGRLRNGD). A disordered region spans residues 146–168 (QEKQNGRLRNGDVDSEDNNSTPD). Positions 186, 189, 233, and 236 each coordinate Zn(2+). The active-site Proton acceptor is the His317.

Belongs to the peptidase C19 family. USP12/USP46 subfamily. In terms of assembly, interacts with WDR48. Interacts with WDR20; this interaction promotes translocation of the USP12 complex to the plasma membrane. Component of the USP12-WDR20-WDR48 deubiquitinating complex. Component of the USP12-DMWD-WDR48 deubiquitinating complex. Interacts with PHLPP1. Interacts with RBPJ. Interacts with CBP; this interaction blocks the acetyltransferase activity of CREBBP. Interacts with ITCH; the interaction is more efficient when both USP12 and WDR48/UAF1 are involved and may mediate recruitment of the USP12 deubiquitinating complex to Notch.

It localises to the nucleus. Its subcellular location is the cytoplasm. The protein resides in the cell membrane. The enzyme catalyses Thiol-dependent hydrolysis of ester, thioester, amide, peptide and isopeptide bonds formed by the C-terminal Gly of ubiquitin (a 76-residue protein attached to proteins as an intracellular targeting signal).. Its activity is regulated as follows. Activated by interaction with WDR20, WDR48 and DMWD through different allosteric mechanisms. Its function is as follows. Deubiquitinating enzyme that plays various roles in the regulation of the immune response and inflammation. During TCR engagement and activation, translocates into the cytoplasm and deubiquitinates its substrates LAT and TRAT1 and prevents their lysosome-dependent degradation to stabilize the TCR signaling complex at the plasma membrane. Plays an essential role in the selective LPS-induced macrophage response through the activation of NF-kappa-B pathway. In addition, promotes that antiviral immune response through targeting DNA sensor IFI16 to inhibit its proteasome-dependent degradation. Participates in the interferon signaling pathway and antiviral response independently of its deubiquitinase activity by maintaining nuclear phosphorylated STAT1 levels via inhibition of its CREBBP-mediated acetylation and subsequent dephosphorylation. Plays an intrinsic role in promoting the differentiation, activation and proliferation of CD4(+) T-cell by activating the NF-kappa-B signaling pathway through deubiquitinating and stabilizing B-cell lymphoma/leukemia 10/BCL10. In myeloid-derived suppressor cells promotes the activation of the NF-kappa-B via deubiquitination and stabilization of RELA. Regulates the 'Lys-63'-linked polyubiquitin chains of BAX and thereby modulates the mitochondrial apoptotic process. Negative regulator of NOTCH signaling that specifically deubiquitinates non-activated NOTCH receptors to target them for lysosomal degradation; deubiquitination of NOTCH stimulates its transport form late endosomes to lysosomes. Protects neurons against HTT/huntingtin-induced polyglutamine expansion-dependent neurodegeneration through regulation of autophagic flux. This function is independent of deubiquitinase activity or of other components of the USP12-WDR20-WDR48 deubiquitinating complex. In complex with WDR48, acts as a potential tumor suppressor by positively regulating PHLPP1 stability. This chain is Ubiquitin carboxyl-terminal hydrolase 12, found in Rattus norvegicus (Rat).